A 277-amino-acid chain; its full sequence is RNA-binding protein pno-1 (277 aa).

2 disordered regions span residues 1–52 (MATS…KLVK) and 72–100 (DEDA…GESR). Over residues 8-27 (FDDELPMEEGMPELLDDEDV) the composition is skewed to acidic residues. Positions 30 to 40 (TLPSLLEQNLD) are enriched in polar residues. The segment covering 72–81 (DEDATADTAD) has biased composition (acidic residues). The 53-residue stretch at 198 to 250 (GDHVSRAIGRIAGKDGRTKLVIENTTKTRIVVANTKIHILGAYQNLKLARNAV) folds into the KH domain.

It belongs to the PNO1 family. Part of the small subunit (SSU) processome, composed of more than 70 proteins and the RNA chaperone small nucleolar RNA (snoRNA) U3.

It is found in the nucleus. It localises to the nucleolus. Its function is as follows. Part of the small subunit (SSU) processome, first precursor of the small eukaryotic ribosomal subunit. During the assembly of the SSU processome in the nucleolus, many ribosome biogenesis factors, an RNA chaperone and ribosomal proteins associate with the nascent pre-rRNA and work in concert to generate RNA folding, modifications, rearrangements and cleavage as well as targeted degradation of pre-ribosomal RNA by the RNA exosome. Positively regulates dimethylation of two adjacent adenosines in the loop of a conserved hairpin near the 3'-end of 18S rRNA. The sequence is that of RNA-binding protein pno-1 from Caenorhabditis elegans.